The following is a 127-amino-acid chain: Small ribosomal subunit protein uS13 (127 aa).

The segment at 90-127 is disordered; the sequence is RRHRQGLPVRGQRTRTNARTRRGRRLTVAGKKKTPAKK. Positions 101-127 are enriched in basic residues; it reads QRTRTNARTRRGRRLTVAGKKKTPAKK.

Belongs to the universal ribosomal protein uS13 family. As to quaternary structure, part of the 30S ribosomal subunit. Forms a loose heterodimer with protein S19. Forms two bridges to the 50S subunit in the 70S ribosome.

Functionally, located at the top of the head of the 30S subunit, it contacts several helices of the 16S rRNA. In the 70S ribosome it contacts the 23S rRNA (bridge B1a) and protein L5 of the 50S subunit (bridge B1b), connecting the 2 subunits; these bridges are implicated in subunit movement. Contacts the tRNAs in the A and P-sites. In Synechocystis sp. (strain ATCC 27184 / PCC 6803 / Kazusa), this protein is Small ribosomal subunit protein uS13.